The sequence spans 226 residues: Orotate phosphoribosyltransferase 1 (226 aa).

Residue Lys-30 coordinates 5-phospho-alpha-D-ribose 1-diphosphate. Residue 38–39 (FF) coordinates orotate. 5-phospho-alpha-D-ribose 1-diphosphate contacts are provided by residues 76–77 (YK), Arg-106, Lys-107, Lys-110, His-112, and 132–140 (DDVMTAGTA). Orotate is bound by residues Thr-136 and Arg-164. Phosphoserine occurs at positions 213 and 225.

The protein belongs to the purine/pyrimidine phosphoribosyltransferase family. PyrE subfamily. As to quaternary structure, homodimer.

The enzyme catalyses orotidine 5'-phosphate + diphosphate = orotate + 5-phospho-alpha-D-ribose 1-diphosphate. It functions in the pathway pyrimidine metabolism; UMP biosynthesis via de novo pathway; UMP from orotate: step 1/2. Its function is as follows. Catalyzes the transfer of a ribosyl phosphate group from 5-phosphoribose 1-diphosphate to orotate, leading to the formation of orotidine monophosphate (OMP). This chain is Orotate phosphoribosyltransferase 1 (URA5), found in Saccharomyces cerevisiae (strain ATCC 204508 / S288c) (Baker's yeast).